Reading from the N-terminus, the 576-residue chain is Arginine--tRNA ligase (576 aa).

The 'HIGH' region signature appears at 122–132 (PNVAKEMHVGH).

Belongs to the class-I aminoacyl-tRNA synthetase family. In terms of assembly, monomer.

It is found in the cytoplasm. It carries out the reaction tRNA(Arg) + L-arginine + ATP = L-arginyl-tRNA(Arg) + AMP + diphosphate. This is Arginine--tRNA ligase from Erwinia tasmaniensis (strain DSM 17950 / CFBP 7177 / CIP 109463 / NCPPB 4357 / Et1/99).